Here is a 1012-residue protein sequence, read N- to C-terminus: Beta-alanine-activating enzyme (1012 aa).

Residues 177-185, D411, R426, and K516 contribute to the ATP site; that span reads TTGTTGKPK.

Belongs to the ATP-dependent AMP-binding enzyme family.

In terms of biological role, covalently binds beta-alanine in an ATP-dependent manner to form a thioester bond with its phosphopantetheine group and transfers it to an, as yet, unknown acceptor. May be required for a post-translational protein modification or for post-transcriptional modification of an RNA. The polypeptide is Beta-alanine-activating enzyme (Drosophila melanogaster (Fruit fly)).